Reading from the N-terminus, the 343-residue chain is Ribosomal RNA small subunit methyltransferase C (343 aa).

It belongs to the methyltransferase superfamily. RsmC family. As to quaternary structure, monomer.

It localises to the cytoplasm. The catalysed reaction is guanosine(1207) in 16S rRNA + S-adenosyl-L-methionine = N(2)-methylguanosine(1207) in 16S rRNA + S-adenosyl-L-homocysteine + H(+). Specifically methylates the guanine in position 1207 of 16S rRNA in the 30S particle. The protein is Ribosomal RNA small subunit methyltransferase C of Escherichia coli (strain K12 / DH10B).